The chain runs to 137 residues: Small ribosomal subunit protein uS11 (137 aa).

A compositionally biased stretch (polar residues) spans 1–10 (MPPKSRSTGP). 2 disordered regions span residues 1–27 (MPPK…IPHG) and 116–137 (GTIS…RRRV). Residues 12 to 21 (KTQKTRRRDK) show a composition bias toward basic residues.

It belongs to the universal ribosomal protein uS11 family. Part of the 30S ribosomal subunit. Interacts with proteins S7 and S18. Binds to IF-3.

Its function is as follows. Located on the platform of the 30S subunit, it bridges several disparate RNA helices of the 16S rRNA. Forms part of the Shine-Dalgarno cleft in the 70S ribosome. The protein is Small ribosomal subunit protein uS11 of Rhodococcus erythropolis (strain PR4 / NBRC 100887).